Consider the following 117-residue polypeptide: uncharacterized protein (117 aa).

4 helical membrane passes run 3 to 23, 40 to 60, 66 to 86, and 94 to 114; these read AVPI…NILL, FLTP…LLFA, LEVS…LIIA, and PFHL…IFLA.

To E.coli and S.aureus ethidium bromide resistance proteins (ebr/QacC/EmrE/MvrC).

The protein localises to the cell membrane. This is an uncharacterized protein from Sinorhizobium fredii (strain NBRC 101917 / NGR234).